A 566-amino-acid polypeptide reads, in one-letter code: MPGHPGAAEQLVKTGWRSWHLGFWKALAPLQAAWDAFSQPVPASCGQLLTQLLLCASLAAAAAGLVYHWLASLLLYPPGPSAMVATVCGLLVFLSLGLVPPVRCLFALSVPTLGMEQGRRLLLSYSTATLAIAVVPNVLANVGAAGQVLRCVTEGSLESLLNTTHQLHAASRALGPTGQAGSRGLTFEAQDNGSAFYLHMLRVTQQVLEDFSGLESLARAAALGTQRVVTGLFMLGLLVESAWYLHCYLTDLRFDNIYATQQLTQRLAQAQATHLLAPPPTWLLQAAQLRLSQEELLSCLLRLGLLALLLVATAVAVATDHVAFLLAQATVDWAQKLPTVPITLTVKYDVAYTVLGFIPFLFNQLAPESPFLSVHSSYQWELRLTSARCPLLPARRPRAAAPLAAGALQLLAGSTVLLEAYARRLRHAIAASFFTAQEARRVRHLHARLQRRHDRHQGQQLPLGDPSCVPTPRPACKPPAWIDYRLDALRTESSEGEGKELWSCRDLSCNLGPVPPPCVTLGKSLHLSEPRFLHLHNDSIFTIDVTYFPRRDVVRMEGNTGHDRPG.

At 1 to 51 (MPGHPGAAEQLVKTGWRSWHLGFWKALAPLQAAWDAFSQPVPASCGQLLTQ) the chain is on the cytoplasmic side. Residues 52–72 (LLLCASLAAAAAGLVYHWLAS) traverse the membrane as a helical segment. The Extracellular segment spans residues 73–81 (LLLYPPGPS). The helical transmembrane segment at 82–102 (AMVATVCGLLVFLSLGLVPPV) threads the bilayer. Residues 103–128 (RCLFALSVPTLGMEQGRRLLLSYSTA) lie on the Cytoplasmic side of the membrane. The helical transmembrane segment at 129–149 (TLAIAVVPNVLANVGAAGQVL) threads the bilayer. Residues 150–227 (RCVTEGSLES…ARAAALGTQR (78 aa)) are Extracellular-facing. Residues 228–248 (VVTGLFMLGLLVESAWYLHCY) traverse the membrane as a helical segment. Residues 249–304 (LTDLRFDNIYATQQLTQRLAQAQATHLLAPPPTWLLQAAQLRLSQEELLSCLLRLG) lie on the Cytoplasmic side of the membrane. The chain crosses the membrane as a helical span at residues 305–325 (LLALLLVATAVAVATDHVAFL). Residues 326–398 (LAQATVDWAQ…CPLLPARRPR (73 aa)) are Extracellular-facing. Residues 399 to 419 (AAAPLAAGALQLLAGSTVLLE) traverse the membrane as a helical segment. At 420-566 (AYARRLRHAI…EGNTGHDRPG (147 aa)) the chain is on the cytoplasmic side.

It localises to the membrane. Its function is as follows. Probable cell surface receptor that plays a role in cellular fusion and cell differentiation. Cooperates with DCSTAMP in modulating cell-cell fusion in both osteoclasts and foreign body giant cells (FBGCs). Involved in osteoclast bone resorption. Promotes osteoclast differentiation and may play a role in the multinucleated osteoclast maturation. In Homo sapiens (Human), this protein is Osteoclast stimulatory transmembrane protein (OCSTAMP).